The primary structure comprises 106 residues: Small ribosomal subunit protein uS10 (106 aa).

This sequence belongs to the universal ribosomal protein uS10 family. Part of the 30S ribosomal subunit.

Its function is as follows. Involved in the binding of tRNA to the ribosomes. This chain is Small ribosomal subunit protein uS10, found in Prochlorococcus marinus (strain MIT 9211).